We begin with the raw amino-acid sequence, 322 residues long: Adenine deaminase (322 aa).

Residues histidine 11, histidine 13, and histidine 189 each contribute to the Zn(2+) site. Catalysis depends on glutamate 192, which acts as the Proton donor. Residue aspartate 270 coordinates Zn(2+). Residue aspartate 271 participates in substrate binding.

It belongs to the metallo-dependent hydrolases superfamily. Adenosine and AMP deaminases family. Adenine deaminase type 2 subfamily. Zn(2+) is required as a cofactor.

It carries out the reaction adenine + H2O + H(+) = hypoxanthine + NH4(+). Catalyzes the hydrolytic deamination of adenine to hypoxanthine. Plays an important role in the purine salvage pathway and in nitrogen catabolism. This chain is Adenine deaminase, found in Rhizobium leguminosarum bv. trifolii (strain WSM2304).